The chain runs to 149 residues: Angiogenin (149 aa).

The signal sequence occupies residues 1–24 (MVMGLGPLVLIFVLGLGVTPPTLA). Gln-25 is subject to Pyrrolidone carboxylic acid. The Proton acceptor role is filled by His-37. Arg-45 contributes to the tRNA binding site. 3 disulfides stabilise this stretch: Cys-50/Cys-105, Cys-63/Cys-116, and Cys-81/Cys-131. The Nucleolar localization signal motif lies at 55 to 59 (KRRDL). 2 residues coordinate tRNA: Cys-105 and Ile-127. Catalysis depends on His-138, which acts as the Proton donor.

The protein belongs to the pancreatic ribonuclease family. As to quaternary structure, homodimer. Interacts with RNH1; inhibiting ANG ribonuclease activity. Interacts with PCNA.

It is found in the secreted. The protein resides in the nucleus. The protein localises to the nucleolus. It localises to the cytoplasm. Its subcellular location is the stress granule. With respect to regulation, has weak tRNA ribonuclease activity by itself due to partial autoinhibition by its C-terminus, which folds into a short alpha-helix that partially occludes the substrate-binding site. In absence of stress, the ribonuclease activity is inhibited by RNH1 in the cytoplasm. In response to stress, dissociates from RNH1 in the cytoplasm and associates with cytoplasmic ribosomes with vacant A-sites: ribosomes directly activate the tRNA ribonuclease activity of ANG by refolding the C-terminal alpha-helix. In response to stress, the angiogenic activity of ANG is inhibited by RNH1 in the nucleus. In terms of biological role, secreted ribonuclease that can either promote or restrict cell proliferation of target cells, depending on the context. Endocytosed in target cells via its receptor PLXNB2 and translocates to the cytoplasm or nucleus. Under stress conditions, localizes to the cytoplasm and promotes the assembly of stress granules (SGs): specifically cleaves a subset of tRNAs within anticodon loops to produce tRNA-derived stress-induced fragments (tiRNAs), resulting in translation repression and inhibition of cell proliferation. tiRNas also prevent formation of apoptosome, thereby promoting cell survival. Preferentially cleaves RNAs between a pyrimidine and an adenosine residue, suggesting that it cleaves the anticodon loop of tRNA(Ala) (32-UUAGCAU-38) after positions 33 and 36. Cleaves a subset of tRNAs, including tRNA(Ala), tRNA(Glu), tRNA(Gly), tRNA(Lys), tRNA(Val), tRNA(His), tRNA(Asp) and tRNA(Sec). Under growth conditions and in differentiated cells, translocates to the nucleus and stimulates ribosomal RNA (rRNA) transcription, including that containing the initiation site sequences of 45S rRNA, thereby promoting cell growth and proliferation. Angiogenin induces vascularization of normal and malignant tissues via its ability to promote rRNA transcription. Involved in hematopoietic stem and progenitor cell (HSPC) growth and survival by promoting rRNA transcription in growth conditions and inhibiting translation in response to stress, respectively. Mediates the crosstalk between myeloid and intestinal epithelial cells to protect the intestinal epithelial barrier integrity: secreted by myeloid cells and promotes intestinal epithelial cells proliferation and survival. Also mediates osteoclast-endothelial cell crosstalk in growing bone: produced by osteoclasts and protects the neighboring vascular cells against senescence by promoting rRNA transcription. The protein is Angiogenin (ANG) of Oryctolagus cuniculus (Rabbit).